The following is a 358-amino-acid chain: WD repeat-containing protein 53 (358 aa).

WD repeat units follow at residues 8–47 (GHSS…GHMQ), 92–131 (VNEE…VTRS), 134–174 (RHSN…PVWI), 195–234 (LNPA…CERE), and 239–278 (GHTL…EKLQ). Residues 288-309 (KKAKRAACPTQGGNSRAPGAED) form a disordered region.

The protein belongs to the WD repeat WDR53 family.

This chain is WD repeat-containing protein 53 (Wdr53), found in Mus musculus (Mouse).